A 225-amino-acid polypeptide reads, in one-letter code: Ribosomal RNA small subunit methyltransferase G (225 aa).

Residues Gly69, 119-120 (AE), and Arg136 each bind S-adenosyl-L-methionine.

Belongs to the methyltransferase superfamily. RNA methyltransferase RsmG family.

It is found in the cytoplasm. Specifically methylates the N7 position of a guanine in 16S rRNA. The chain is Ribosomal RNA small subunit methyltransferase G from Pseudothermotoga lettingae (strain ATCC BAA-301 / DSM 14385 / NBRC 107922 / TMO) (Thermotoga lettingae).